The chain runs to 138 residues: Large ribosomal subunit protein uL16 (138 aa).

Basic residues predominate over residues 1 to 13 (MLQPKRRKYRKEQ). The disordered stretch occupies residues 1-24 (MLQPKRRKYRKEQKGRNTGKATRG).

The protein belongs to the universal ribosomal protein uL16 family. In terms of assembly, part of the 50S ribosomal subunit.

Functionally, binds 23S rRNA and is also seen to make contacts with the A and possibly P site tRNAs. In Burkholderia lata (strain ATCC 17760 / DSM 23089 / LMG 22485 / NCIMB 9086 / R18194 / 383), this protein is Large ribosomal subunit protein uL16.